The primary structure comprises 489 residues: Ubiquitin carboxyl-terminal hydrolase 14 (489 aa).

One can recognise a USP domain in the interval 102-458; sequence CGLANLGNTC…SAYVLLYEAR (357 aa). C111 acts as the Nucleophile in catalysis. H409 serves as the catalytic Proton acceptor. The tract at residues 467–489 is disordered; sequence PPAPVPTEVAADTAEPMEVSEKQ.

This sequence belongs to the peptidase C19 family. USP14/UBP6 subfamily.

It carries out the reaction Thiol-dependent hydrolysis of ester, thioester, amide, peptide and isopeptide bonds formed by the C-terminal Gly of ubiquitin (a 76-residue protein attached to proteins as an intracellular targeting signal).. In terms of biological role, proteasome-associated deubiquitinase which releases ubiquitin from the proteasome targeted ubiquitinated proteins. Ensures the regeneration of ubiquitin at the proteasome. The sequence is that of Ubiquitin carboxyl-terminal hydrolase 14 (usp-14) from Caenorhabditis elegans.